An 86-amino-acid polypeptide reads, in one-letter code: Small ribosomal subunit protein bS20 (86 aa).

Positions 1 to 25 are disordered; the sequence is MANIKSQMKRIKTNEANRQRNKAVK.

This sequence belongs to the bacterial ribosomal protein bS20 family.

Binds directly to 16S ribosomal RNA. The polypeptide is Small ribosomal subunit protein bS20 (Saccharopolyspora erythraea (strain ATCC 11635 / DSM 40517 / JCM 4748 / NBRC 13426 / NCIMB 8594 / NRRL 2338)).